The primary structure comprises 188 residues: Protein-L-isoaspartate O-methyltransferase (188 aa).

Ser-33 is an active-site residue.

This sequence belongs to the methyltransferase superfamily. L-isoaspartyl/D-aspartyl protein methyltransferase family.

The protein resides in the cytoplasm. It catalyses the reaction [protein]-L-isoaspartate + S-adenosyl-L-methionine = [protein]-L-isoaspartate alpha-methyl ester + S-adenosyl-L-homocysteine. Catalyzes the methyl esterification of L-isoaspartyl residues in peptides and proteins that result from spontaneous decomposition of normal L-aspartyl and L-asparaginyl residues. It plays a role in the repair and/or degradation of damaged proteins. In Methanocella arvoryzae (strain DSM 22066 / NBRC 105507 / MRE50), this protein is Protein-L-isoaspartate O-methyltransferase.